Consider the following 244-residue polypeptide: Mannose-binding protein C (244 aa).

The first 18 residues, 1–18 (MSIFTSFLLLCVVTVVYA), serve as a signal peptide directing secretion. The 59-residue stretch at 38–96 (GLNGFPGKDGRDGAKGEKGEPGQGLRGLQGPPGKVGPTGPPGNPGLKGAVGPKGDRGDR) folds into the Collagen-like domain. The disordered stretch occupies residues 40 to 101 (NGFPGKDGRD…DRGDRAEFDT (62 aa)). Position 43 is a 4-hydroxyproline (proline 43). The span at 45 to 57 (KDGRDGAKGEKGE) shows a compositional bias: basic and acidic residues. Residues proline 58, proline 69, proline 78, and proline 81 each carry the 4-hydroxyproline modification. Over residues 65 to 74 (LQGPPGKVGP) the composition is skewed to low complexity. A compositionally biased stretch (basic and acidic residues) spans 90-99 (KGDRGDRAEF). Positions 108–126 (IAALRSELRALRNWVLFSL) form a coiled coil. A C-type lectin domain is found at 129–241 (KVGKKYFVSS…CSDSFLAICE (113 aa)). Disulfide bonds link cysteine 151-cysteine 240 and cysteine 218-cysteine 232. Residue asparagine 210 is glycosylated (N-linked (GlcNAc...) asparagine).

As to quaternary structure, oligomeric complex of 3 or more homotrimers. Interacts with MASP1 and MASP2. Interacts with MEP1A and MEP1B and may inhibit their catalytic activity. In terms of processing, hydroxylation on proline residues within the sequence motif, GXPG, is most likely to be 4-hydroxy as this fits the requirement for 4-hydroxylation in vertebrates.

The protein localises to the secreted. In terms of biological role, calcium-dependent lectin involved in innate immune defense. Binds mannose, fucose and N-acetylglucosamine on different microorganisms and activates the lectin complement pathway. Binds to late apoptotic cells, as well as to apoptotic blebs and to necrotic cells, but not to early apoptotic cells, facilitating their uptake by macrophages. This is Mannose-binding protein C (Mbl2) from Mus musculus (Mouse).